The following is a 223-amino-acid chain: Adenylate kinase (223 aa).

An ATP-binding site is contributed by 10–15 (GSGKGT). The NMP stretch occupies residues 30-59 (ESGAIFREHIGGGTELGKKAKAYIDRGDLV). Residues Ser-31, Arg-36, 57–59 (DLV), 84–87 (GFPR), and Gln-91 each bind AMP. An LID region spans residues 125 to 164 (GRRLCKNNNNHPNNIFIEAIKPNGDVCRVCGGTLSSRSDD). Arg-126 is a binding site for ATP. Residues Arg-161 and Arg-173 each coordinate AMP. ATP is bound at residue Gly-209.

Belongs to the adenylate kinase family. As to quaternary structure, monomer.

The protein localises to the cytoplasm. It carries out the reaction AMP + ATP = 2 ADP. Its pathway is purine metabolism; AMP biosynthesis via salvage pathway; AMP from ADP: step 1/1. Catalyzes the reversible transfer of the terminal phosphate group between ATP and AMP. Plays an important role in cellular energy homeostasis and in adenine nucleotide metabolism. The protein is Adenylate kinase of Desulfovibrio desulfuricans (strain ATCC 27774 / DSM 6949 / MB).